Here is a 119-residue protein sequence, read N- to C-terminus: Protein phosphatase EYA4 (119 aa).

The protein belongs to the HAD-like hydrolase superfamily. EYA family. Requires Mg(2+) as cofactor.

The protein resides in the cytoplasm. It localises to the nucleus. The enzyme catalyses O-phospho-L-tyrosyl-[protein] + H2O = L-tyrosyl-[protein] + phosphate. Tyrosine phosphatase that specifically dephosphorylates 'Tyr-142' of histone H2AX (H2AXY142ph). 'Tyr-142' phosphorylation of histone H2AX plays a central role in DNA repair and acts as a mark that distinguishes between apoptotic and repair responses to genotoxic stress. Promotes efficient DNA repair by dephosphorylating H2AX, promoting the recruitment of DNA repair complexes containing MDC1. Its function as histone phosphatase probably explains its role in transcription regulation during organogenesis. May be involved in development of the eye. The sequence is that of Protein phosphatase EYA4 (eya4) from Takifugu rubripes (Japanese pufferfish).